The chain runs to 708 residues: DNA-directed RNA polymerase III subunit RPC5 (708 aa).

The segment covering 146–155 has biased composition (basic and acidic residues); sequence DAKHREREAA. A disordered region spans residues 146–170; sequence DAKHREREAANEAGDSSQDEAEDDV. Phosphoserine is present on residues Ser-161 and Ser-162. Lys-171 is covalently cross-linked (Glycyl lysine isopeptide (Lys-Gly) (interchain with G-Cter in SUMO2)). Ser-192 is modified (phosphoserine). The residue at position 224 (Tyr-224) is a Phosphotyrosine. Residue Lys-432 forms a Glycyl lysine isopeptide (Lys-Gly) (interchain with G-Cter in SUMO2) linkage. The interval 485–552 is disordered; that stretch reads QLRVPAVPPG…DSFNGHPPQG (68 aa). Residue Lys-498 forms a Glycyl lysine isopeptide (Lys-Gly) (interchain with G-Cter in SUMO1); alternate linkage. Lys-498 participates in a covalent cross-link: Glycyl lysine isopeptide (Lys-Gly) (interchain with G-Cter in SUMO2); alternate. Residues 502–519 are compositionally biased toward acidic residues; that stretch reads VSEEGEEDEEQEAEEEPM. A phosphoserine mark is found at Ser-503 and Ser-522. Residues 556-708 form a required for Pol III complex stability region; the sequence is TPVARELKAF…MWYLKGTVQS (153 aa). Lys-659 participates in a covalent cross-link: Glycyl lysine isopeptide (Lys-Gly) (interchain with G-Cter in SUMO2).

As to quaternary structure, component of the RNA polymerase III complex consisting of at least 17 subunits: a ten-subunit horseshoe-shaped catalytic core composed of POLR3A/RPC1, POLR3B/RPC2, POLR1C/RPAC1, POLR1D/RPAC2, POLR3K/RPC10, POLR2E/RPABC1, POLR2F/RPABC2, POLR2H/RPABC3, POLR2K/RPABC4 and POLR2L/RPABC5; the stalk composed of two subunits POLR3H/RPC8 and CRCP/RPC9, forming a structural mobile part that protrudes out of the core and functions primarily in transcription initiation; and additional subunits homologous to general transcription factors of the RNA polymerase II machinery, POLR3D/RPC4-POLR3E/RPC5 heterodimer and POLR3/CRPC3-POLR3F/RPC6-POLR3G/RPC7 heterotrimer.

It is found in the nucleus. Its function is as follows. DNA-dependent RNA polymerase catalyzes the transcription of DNA into RNA using the four ribonucleoside triphosphates as substrates. Specific peripheric component of RNA polymerase III (Pol III) which synthesizes small non-coding RNAs including 5S rRNA, snRNAs, tRNAs and miRNAs from at least 500 distinct genomic loci. Assembles with POLR3D/RPC4 forming a subcomplex that binds the Pol III core. Enables recruitment of Pol III at transcription initiation site and drives transcription initiation from both type 2 and type 3 DNA promoters. Required for efficient transcription termination and reinitiation. Plays a key role in sensing and limiting infection by intracellular bacteria and DNA viruses. Acts as a nuclear and cytosolic DNA sensor involved in innate immune response. Can sense non-self dsDNA that serves as template for transcription into dsRNA. The non-self RNA polymerase III transcripts, such as Epstein-Barr virus-encoded RNAs (EBERs) induce type I interferon and NF-kappa-B through the RIG-I pathway. This chain is DNA-directed RNA polymerase III subunit RPC5, found in Homo sapiens (Human).